Consider the following 178-residue polypeptide: 2-C-methyl-D-erythritol 2,4-cyclodiphosphate synthase (178 aa).

Residues aspartate 24, histidine 26, and histidine 61 each contribute to the a divalent metal cation site. A 4-CDP-2-C-methyl-D-erythritol 2-phosphate-binding site is contributed by aspartate 24–histidine 26. Threonine 150–glutamate 153 provides a ligand contact to 4-CDP-2-C-methyl-D-erythritol 2-phosphate.

The protein belongs to the IspF family. In terms of assembly, homotrimer. It depends on a divalent metal cation as a cofactor.

The enzyme catalyses 4-CDP-2-C-methyl-D-erythritol 2-phosphate = 2-C-methyl-D-erythritol 2,4-cyclic diphosphate + CMP. Its pathway is isoprenoid biosynthesis; isopentenyl diphosphate biosynthesis via DXP pathway; isopentenyl diphosphate from 1-deoxy-D-xylulose 5-phosphate: step 4/6. Involved in the biosynthesis of isopentenyl diphosphate (IPP) and dimethylallyl diphosphate (DMAPP), two major building blocks of isoprenoid compounds. Catalyzes the conversion of 4-diphosphocytidyl-2-C-methyl-D-erythritol 2-phosphate (CDP-ME2P) to 2-C-methyl-D-erythritol 2,4-cyclodiphosphate (ME-CPP) with a corresponding release of cytidine 5-monophosphate (CMP). This Chlamydia muridarum (strain MoPn / Nigg) protein is 2-C-methyl-D-erythritol 2,4-cyclodiphosphate synthase.